Reading from the N-terminus, the 394-residue chain is Protein-glutamate methylesterase/protein-glutamine glutaminase 2 (394 aa).

The Response regulatory domain occupies 4-121 (KVLVVDDSSF…ARNRDEAISL (118 aa)). 4-aspartylphosphate is present on D55. The CheB-type methylesterase domain maps to 202–394 (SGKKYQLMAI…AERILVEVGR (193 aa)). Active-site residues include S214, H241, and D337.

This sequence belongs to the CheB family. Phosphorylated by CheA. Phosphorylation of the N-terminal regulatory domain activates the methylesterase activity.

It is found in the cytoplasm. It carries out the reaction [protein]-L-glutamate 5-O-methyl ester + H2O = L-glutamyl-[protein] + methanol + H(+). The catalysed reaction is L-glutaminyl-[protein] + H2O = L-glutamyl-[protein] + NH4(+). Its function is as follows. Involved in chemotaxis. Part of a chemotaxis signal transduction system that modulates chemotaxis in response to various stimuli. Catalyzes the demethylation of specific methylglutamate residues introduced into the chemoreceptors (methyl-accepting chemotaxis proteins or MCP) by CheR. Also mediates the irreversible deamidation of specific glutamine residues to glutamic acid. The chain is Protein-glutamate methylesterase/protein-glutamine glutaminase 2 from Photobacterium profundum (strain SS9).